A 366-amino-acid polypeptide reads, in one-letter code: Cobalt-precorrin-5B C(1)-methyltransferase (366 aa).

Belongs to the CbiD family.

It carries out the reaction Co-precorrin-5B + S-adenosyl-L-methionine = Co-precorrin-6A + S-adenosyl-L-homocysteine. The protein operates within cofactor biosynthesis; adenosylcobalamin biosynthesis; cob(II)yrinate a,c-diamide from sirohydrochlorin (anaerobic route): step 6/10. Its function is as follows. Catalyzes the methylation of C-1 in cobalt-precorrin-5B to form cobalt-precorrin-6A. The chain is Cobalt-precorrin-5B C(1)-methyltransferase from Pseudomonas aeruginosa (strain UCBPP-PA14).